Here is a 420-residue protein sequence, read N- to C-terminus: MSEKRVQPLARDAMAYVLAGGRGSRLKELTDRRAKPAVYFGGKARIIDFALSNALNSGIRRIGVATQYKAHSLIRHLQRGWDFFRPERNESFDILPASQRVSETQWYEGTADAVYQNIDIIEPYAPEYMVILAGDHIYKMDYEYMLQQHVDSGADVTIGCLEVPRMEATGFGVMHVNEKDEIIDFIEKPADPPGIPGNEGFALASMGIYVFHTKFLMEALRRDAADPTSSRDFGKDIIPYIVEHGKAVAHRFADSCVRSDFEHEPYWRDVGTIDAYWQANIDLTDVVPDLDIYDKSWPIWTYAEITPPAKFVHDDEDRRGSAVSSVVSGDCIISGAALNRSLLFTGVRANSYSRLENAVVLPSVKIGRHAQLSNVVIDHGVVIPEGLIVGEDPELDAKRFRRTESGICLITQSMIDKLDL.

Alpha-D-glucose 1-phosphate-binding positions include tyrosine 107, glycine 172, 187 to 188 (EK), and serine 205.

The protein belongs to the bacterial/plant glucose-1-phosphate adenylyltransferase family. As to quaternary structure, homotetramer.

It carries out the reaction alpha-D-glucose 1-phosphate + ATP + H(+) = ADP-alpha-D-glucose + diphosphate. Its pathway is glycan biosynthesis; glycogen biosynthesis. Involved in the biosynthesis of ADP-glucose, a building block required for the elongation reactions to produce glycogen. Catalyzes the reaction between ATP and alpha-D-glucose 1-phosphate (G1P) to produce pyrophosphate and ADP-Glc. This Agrobacterium fabrum (strain C58 / ATCC 33970) (Agrobacterium tumefaciens (strain C58)) protein is Glucose-1-phosphate adenylyltransferase.